The following is a 490-amino-acid chain: E3 ubiquitin-protein ligase Hakai (490 aa).

The disordered stretch occupies residues 34–60 (QANKAKPAPRTQRTINRMPAKAPPGDE). The segment at 108–148 (CDKCGLPIKIYGRMIPCKHVFCYDCAILHEKKGDKMCPGCS) adopts an RING-type zinc-finger fold. The HYB domain stretch occupies residues 147–205 (CSDPVQRIEQCTRGSLFMCSIVQGCKRTYLSQRDLQAHINHRHMRAGKPVTRASLENVH). A C2H2-type zinc finger spans residues 163–189 (FMCSIVQGCKRTYLSQRDLQAHINHRH). Residues Ser200, Ser284, and Ser289 each carry the phosphoserine modification. The disordered stretch occupies residues 254 to 490 (QPHEDIRAPP…DQTRYRPYYQ (237 aa)). 3 stretches are compositionally biased toward pro residues: residues 341–358 (APPPPPPPPISHPMPHPP), 371–388 (APPPPMTSAPPPITPPPG), and 398–422 (MNHPPPGPPPPQHGGPPVTAPPPHH). Positions 426–441 (NSLPQFTEDQGTLSPP) are enriched in polar residues. Residues 456-477 (PRGPPPPPRLQGPPSQTPLPGP) are compositionally biased toward pro residues.

The protein belongs to the Hakai family. As to quaternary structure, homodimer. Interacts with tyrosine-phosphorylated SRC substrates. Component of the WMM complex, a N6-methyltransferase complex composed of a catalytic subcomplex, named MAC, and of an associated subcomplex, named MACOM. The MAC subcomplex is composed of METTL3 and METTL14. The MACOM subcomplex is composed of WTAP, ZC3H13, CBLL1/HAKAI, VIRMA, and, in some cases of RBM15 (RBM15 or RBM15B). Also a component of a MACOM-like complex, named WTAP complex, composed of WTAP, ZC3H13, CBLL1, VIRMA, RBM15, BCLAF1 and THRAP3. In terms of processing, phosphorylated on tyrosine residues.

It localises to the nucleus speckle. Its subcellular location is the nucleus. The protein localises to the nucleoplasm. It is found in the cytoplasm. It catalyses the reaction S-ubiquitinyl-[E2 ubiquitin-conjugating enzyme]-L-cysteine + [acceptor protein]-L-lysine = [E2 ubiquitin-conjugating enzyme]-L-cysteine + N(6)-ubiquitinyl-[acceptor protein]-L-lysine.. It participates in protein modification; protein ubiquitination. In terms of biological role, E3 ubiquitin-protein ligase that mediates ubiquitination of several tyrosine-phosphorylated Src substrates, including CDH1, CTTN and DOK1. Targets CDH1 for endocytosis and degradation. Associated component of the WMM complex, a complex that mediates N6-methyladenosine (m6A) methylation of RNAs, a modification that plays a role in the efficiency of mRNA splicing and RNA processing. Its function in the WMM complex is unknown. This Macaca fascicularis (Crab-eating macaque) protein is E3 ubiquitin-protein ligase Hakai.